The following is a 296-amino-acid chain: Nucleotide-binding protein Pnuc_1915 (296 aa).

8–15 contributes to the ATP binding site; that stretch reads GISGSGKS. A GTP-binding site is contributed by 57-60; sequence DARR.

This sequence belongs to the RapZ-like family.

Displays ATPase and GTPase activities. The polypeptide is Nucleotide-binding protein Pnuc_1915 (Polynucleobacter asymbioticus (strain DSM 18221 / CIP 109841 / QLW-P1DMWA-1) (Polynucleobacter necessarius subsp. asymbioticus)).